Reading from the N-terminus, the 376-residue chain is Succinyl-diaminopimelate desuccinylase (376 aa).

A Zn(2+)-binding site is contributed by His68. Asp70 is an active-site residue. A Zn(2+)-binding site is contributed by Asp101. Glu135 (proton acceptor) is an active-site residue. Zn(2+) contacts are provided by Glu136, Glu164, and His349.

This sequence belongs to the peptidase M20A family. DapE subfamily. Homodimer. Zn(2+) is required as a cofactor. Co(2+) serves as cofactor.

The enzyme catalyses N-succinyl-(2S,6S)-2,6-diaminopimelate + H2O = (2S,6S)-2,6-diaminopimelate + succinate. The protein operates within amino-acid biosynthesis; L-lysine biosynthesis via DAP pathway; LL-2,6-diaminopimelate from (S)-tetrahydrodipicolinate (succinylase route): step 3/3. Functionally, catalyzes the hydrolysis of N-succinyl-L,L-diaminopimelic acid (SDAP), forming succinate and LL-2,6-diaminopimelate (DAP), an intermediate involved in the bacterial biosynthesis of lysine and meso-diaminopimelic acid, an essential component of bacterial cell walls. The chain is Succinyl-diaminopimelate desuccinylase from Marinobacter nauticus (strain ATCC 700491 / DSM 11845 / VT8) (Marinobacter aquaeolei).